The following is a 218-amino-acid chain: RNA polymerase sigma-H factor (218 aa).

The short motif at 62-75 is the Polymerase core binding element; sequence DIVQEGMIGLYKSI. The segment at residues 182 to 201 is a DNA-binding region (H-T-H motif); that stretch reads YQEISDELNRHVKSIDNALQ.

The protein belongs to the sigma-70 factor family. In terms of assembly, interacts transiently with the RNAP core.

In terms of biological role, sigma factors are initiation factors that promote the attachment of RNA polymerase (RNAP) to specific initiation sites and are then released. This sigma factor is involved in the transition to post-exponential phase in the beginning of sporulation. It is also required for transcription of several stationary phase genes. Association with the RNAP core increases rapidly in early exponential phase, and reamins constant expression level after. The chain is RNA polymerase sigma-H factor (sigH) from Bacillus subtilis (strain 168).